A 174-amino-acid chain; its full sequence is NADH-ubiquinone oxidoreductase chain 6 (174 aa).

5 helical membrane passes run 4-24, 25-45, 48-68, 82-102, and 143-163; these read LIIMTICLIISFIFMQMKHPL, SMGLMLLTQTFLTCLLTGIYV, FWFSYVLFLIFLGGMLILFIY, FNLTTLSLLIFFLMTLFFFII, and LITLLLINYLFLTLLVTVKIT.

This sequence belongs to the complex I subunit 6 family.

The protein localises to the mitochondrion membrane. It carries out the reaction a ubiquinone + NADH + 5 H(+)(in) = a ubiquinol + NAD(+) + 4 H(+)(out). Its function is as follows. Core subunit of the mitochondrial membrane respiratory chain NADH dehydrogenase (Complex I) that is believed to belong to the minimal assembly required for catalysis. Complex I functions in the transfer of electrons from NADH to the respiratory chain. The immediate electron acceptor for the enzyme is believed to be ubiquinone. The chain is NADH-ubiquinone oxidoreductase chain 6 (ND6) from Anopheles quadrimaculatus (Common malaria mosquito).